Consider the following 126-residue polypeptide: Large ribosomal subunit protein bL19 (126 aa).

The protein belongs to the bacterial ribosomal protein bL19 family.

Functionally, this protein is located at the 30S-50S ribosomal subunit interface and may play a role in the structure and function of the aminoacyl-tRNA binding site. The chain is Large ribosomal subunit protein bL19 from Bradyrhizobium diazoefficiens (strain JCM 10833 / BCRC 13528 / IAM 13628 / NBRC 14792 / USDA 110).